The sequence spans 82 residues: Mu-conotoxin MrVIA (82 aa).

The signal sequence occupies residues 1 to 22; sequence MKLTCMMIVAVLFLTAWTLVMA. A propeptide spanning residues 23–49 is cleaved from the precursor; that stretch reads DDSNNGLANHFSKSRDEMEDPEASKLE. 3 disulfide bridges follow: Cys53/Cys71, Cys60/Cys76, and Cys70/Cys81.

Expressed by the venom duct.

Its subcellular location is the secreted. Its function is as follows. MuO-conotoxins are gating-modifier toxins that inhibit sodium current by trapping the domain II voltage sensor in the closed position to prevent opening of the sodium channel. This toxin inhibits rNav1.2/SCN2A (IC(50)=532 nM), rNav1.4/SCN4A (IC(50)=438 nM) and rNav1.7/SCN9A (IC(50)=345 nM). It blocks Nav channels by interacting mainly with the C-terminal part of the pore loop of domain-3. It does not bind on site 1. At small concentration, this toxin also acts as a calcium current agonist, whereas at higher doses it blocks fast-inactivating calcium current. The sequence is that of Mu-conotoxin MrVIA from Conus marmoreus (Marble cone).